Here is a 67-residue protein sequence, read N- to C-terminus: uncharacterized protein (67 aa).

A signal peptide spans 1 to 28 (MSHVSVIAARLLVWVGILLCLGVPQLWA). Asn-39 is a glycosylation site (N-linked (GlcNAc...) asparagine; by host).

This is an uncharacterized protein from Invertebrate iridescent virus 3 (IIV-3).